A 248-amino-acid chain; its full sequence is Proteasome subunit alpha (248 aa).

Ser2 is modified (N-acetylserine; partial).

Belongs to the peptidase T1A family. The 20S proteasome core is composed of 14 alpha and 14 beta subunits that assemble into four stacked heptameric rings, resulting in a barrel-shaped structure. The two inner rings, each composed of seven catalytic beta subunits, are sandwiched by two outer rings, each composed of seven alpha subunits. The catalytic chamber with the active sites is on the inside of the barrel. Has a gated structure, the ends of the cylinder being occluded by the N-termini of the alpha-subunits. Is capped by the proteasome-associated ATPase, ARC.

It is found in the cytoplasm. It functions in the pathway protein degradation; proteasomal Pup-dependent pathway. Its activity is regulated as follows. The formation of the proteasomal ATPase ARC-20S proteasome complex, likely via the docking of the C-termini of ARC into the intersubunit pockets in the alpha-rings, may trigger opening of the gate for substrate entry. Interconversion between the open-gate and close-gate conformations leads to a dynamic regulation of the 20S proteasome proteolysis activity. Functionally, component of the proteasome core, a large protease complex with broad specificity involved in protein degradation. In Mycobacterium tuberculosis (strain CDC 1551 / Oshkosh), this protein is Proteasome subunit alpha.